The following is a 134-amino-acid chain: Small ribosomal subunit protein uS8c (134 aa).

The protein belongs to the universal ribosomal protein uS8 family. In terms of assembly, part of the 30S ribosomal subunit.

It localises to the plastid. One of the primary rRNA binding proteins, it binds directly to 16S rRNA central domain where it helps coordinate assembly of the platform of the 30S subunit. The protein is Small ribosomal subunit protein uS8c (rps8) of Epifagus virginiana (Beechdrops).